The chain runs to 710 residues: DNA ligase (710 aa).

Positions 1-26 (MPEDAIGQQVPPEQEAAGAEPTSAAR) are disordered. NAD(+)-binding positions include 53-57 (DAEFD), 102-103 (SL), and E132. The N6-AMP-lysine intermediate role is filled by K134. Residues R155, E196, K312, and K336 each coordinate NAD(+). Positions 430, 433, 449, and 455 each coordinate Zn(2+). The BRCT domain occupies 619-708 (EGPRPLEGMT…PDAAREVARV (90 aa)).

It belongs to the NAD-dependent DNA ligase family. LigA subfamily. Mg(2+) is required as a cofactor. Requires Mn(2+) as cofactor.

It catalyses the reaction NAD(+) + (deoxyribonucleotide)n-3'-hydroxyl + 5'-phospho-(deoxyribonucleotide)m = (deoxyribonucleotide)n+m + AMP + beta-nicotinamide D-nucleotide.. DNA ligase that catalyzes the formation of phosphodiester linkages between 5'-phosphoryl and 3'-hydroxyl groups in double-stranded DNA using NAD as a coenzyme and as the energy source for the reaction. It is essential for DNA replication and repair of damaged DNA. The sequence is that of DNA ligase from Salinispora arenicola (strain CNS-205).